Here is a 602-residue protein sequence, read N- to C-terminus: MTHTNMTFSSFGLNSCIITALNDIGYVQPSPIQAACIPYLIKGKDVLGMAQTGSGKTAAFALPLLHNIKLDVRVPQILVLTPTRELAVQVAEAFSNFSKKLIGVHVLALYGGQRYDLQLKSLRKGPQIIVGTPGRLLDHLKRRTLSLSNLHSLVLDEADEMLRMGFIEDVETIMTEIPDRHQTALFSATMPEAIRRISRRFMKNPKEIRIQSNITTRPDIQQSYWMVYGKKTDALIRFLEAEDFSATIIFVRTKNATLEVSEVLERYGYNSAALNGDMNQSLREQTLEKLKDGRLDILIATDVAARGLDVDRISFVINYDIPMDSESYVHRIGRTGRAGRKGKALLFVENRERRLLRNIERAMNISISEVNLPKSDFLSKRRLEKFAQKVQIQLDSKDLHEYRGLLPKLQPNNNSLDIESLAAALLKMAQGERSLIVKPESIVRARHLKIKDTYRNNNYKSLNYVSRYNRDKNVDLYRIDVGRNDGVEVRHIVGAIANEGDISSRKIGNVRLFSNYSTIELPKGLSNTLPKTFIRTKILNKFINIKLLYNSNFKGNYNDIKDVKVYNSNKLRSKKMNNKKFVSSGVRKKIKTNISCNRRRSV.

The Q motif motif lies at 6–34 (MTFSSFGLNSCIITALNDIGYVQPSPIQA). A Helicase ATP-binding domain is found at 37 to 208 (IPYLIKGKDV…RRFMKNPKEI (172 aa)). 50–57 (AQTGSGKT) serves as a coordination point for ATP. The DEAD box signature appears at 156–159 (DEAD). Residues 231-378 (KTDALIRFLE…EVNLPKSDFL (148 aa)) enclose the Helicase C-terminal domain.

Belongs to the DEAD box helicase family. DeaD/CsdA subfamily.

Its subcellular location is the cytoplasm. It catalyses the reaction ATP + H2O = ADP + phosphate + H(+). DEAD-box RNA helicase involved in various cellular processes at low temperature, including ribosome biogenesis, mRNA degradation and translation initiation. This chain is ATP-dependent RNA helicase DeaD, found in Buchnera aphidicola subsp. Baizongia pistaciae (strain Bp).